The chain runs to 213 residues: Peptidyl-tRNA hydrolase (213 aa).

Tyr-15 contributes to the tRNA binding site. His-20 serves as the catalytic Proton acceptor. TRNA-binding residues include Tyr-66, Asn-68, and Asn-114. The tract at residues 186–213 is disordered; it reads MHAKPPRPKPPRPVTAPGAPVPPTEPSA. Residues 196 to 213 show a composition bias toward pro residues; it reads PRPVTAPGAPVPPTEPSA.

The protein belongs to the PTH family. As to quaternary structure, monomer.

It is found in the cytoplasm. The enzyme catalyses an N-acyl-L-alpha-aminoacyl-tRNA + H2O = an N-acyl-L-amino acid + a tRNA + H(+). Functionally, hydrolyzes ribosome-free peptidyl-tRNAs (with 1 or more amino acids incorporated), which drop off the ribosome during protein synthesis, or as a result of ribosome stalling. Its function is as follows. Catalyzes the release of premature peptidyl moieties from peptidyl-tRNA molecules trapped in stalled 50S ribosomal subunits, and thus maintains levels of free tRNAs and 50S ribosomes. In Leptothrix cholodnii (strain ATCC 51168 / LMG 8142 / SP-6) (Leptothrix discophora (strain SP-6)), this protein is Peptidyl-tRNA hydrolase.